The chain runs to 136 residues: Ergosterol biosynthetic protein 28 (136 aa).

4 helical membrane-spanning segments follow: residues 18-34 (VVVSVAALFNTVQSFLT), 56-72 (FGIWTLLSAIVRFYCAY), 79-95 (VYFLCQCTYYLACFHFL), and 109-125 (GLLSPIVVSTVSIWFMA).

It belongs to the ERG28 family. As to quaternary structure, heterotetramer of erg25, erg26, erg27 and erg28. Erg28 acts as a scaffold to tether erg27 and other 4,4-demethylation-related enzymes, forming a demethylation enzyme complex, in the endoplasmic reticulum.

The protein resides in the endoplasmic reticulum membrane. It functions in the pathway steroid metabolism; ergosterol biosynthesis. Its function is as follows. Part of the third module of ergosterol biosynthesis pathway that includes by the late steps of the pathway. Erg28 has a role as a scaffold to help anchor the catalytic components of the C-4 demethylation complex erg25, erg26 and erg27 to the endoplasmic reticulum. The third module or late pathway involves the ergosterol synthesis itself through consecutive reactions that mainly occur in the endoplasmic reticulum (ER) membrane. Firstly, the squalene synthase erg9 catalyzes the condensation of 2 farnesyl pyrophosphate moieties to form squalene, which is the precursor of all steroids. Secondly, squalene is converted into lanosterol by the consecutive action of the squalene epoxidase erg1 and the lanosterol synthase erg7. The lanosterol 14-alpha-demethylase erg11/cyp1 catalyzes C14-demethylation of lanosterol to produce 4,4'-dimethyl cholesta-8,14,24-triene-3-beta-ol. In the next steps, a complex process involving various demethylation, reduction and desaturation reactions catalyzed by the C-14 reductase erg24 and the C-4 demethylation complex erg25-erg26-erg27 leads to the production of zymosterol. Erg28 likely functions in the C-4 demethylation complex reaction by tethering erg26 and Erg27 to the endoplasmic reticulum or to facilitate interaction between these proteins. Then, the sterol 24-C-methyltransferase erg6 catalyzes the methyl transfer from S-adenosyl-methionine to the C-24 of zymosterol to form fecosterol. The C-8 sterol isomerase erg2 catalyzes the reaction which results in unsaturation at C-7 in the B ring of sterols and thus converts fecosterol to episterol. The sterol-C5-desaturases erg31 and erg32 then catalyze the introduction of a C-5 double bond in the B ring to produce 5-dehydroepisterol. The C-22 sterol desaturase erg5 further converts 5-dehydroepisterol into ergosta-5,7,22,24(28)-tetraen-3beta-ol by forming the C-22(23) double bond in the sterol side chain. Finally, ergosta-5,7,22,24(28)-tetraen-3beta-ol is substrate of the C-24(28) sterol reductase erg4 to produce ergosterol. In the genus Schizosaccharomyces, a second route exists between lanosterol and fecosterol, via the methylation of lanosterol to eburicol by erg6, followed by C14-demethylation by erg11/cyp1 and C4-demethylation by the demethylation complex erg25-erg26-erg27. In terms of biological role, extends the chronological lifespan when overexpressed. In Schizosaccharomyces pombe (strain 972 / ATCC 24843) (Fission yeast), this protein is Ergosterol biosynthetic protein 28.